The sequence spans 266 residues: Trypsin Blo t 3 (266 aa).

The N-terminal stretch at 1–15 (MKVLVLFCLVSLAAA) is a signal peptide. A propeptide spanning residues 16-35 (GPLKDALNKAQVDAFYAEGY) is cleaved from the precursor. Residues 36–260 (IVDGSNAADG…RVGNYISWIK (225 aa)) form the Peptidase S1 domain. An intrachain disulfide couples Cys-60 to Cys-76. Catalysis depends on charge relay system residues His-75 and Asp-120. Intrachain disulfides connect Cys-187/Cys-204 and Cys-216/Cys-240. Ser-220 serves as the catalytic Charge relay system.

Belongs to the peptidase S1 family.

The protein localises to the secreted. It carries out the reaction Preferential cleavage: Arg-|-Xaa, Lys-|-Xaa.. The chain is Trypsin Blo t 3 from Blomia tropicalis (Mite).